A 150-amino-acid polypeptide reads, in one-letter code: Phosphopantetheine adenylyltransferase (150 aa).

A substrate-binding site is contributed by Thr9. ATP contacts are provided by residues 9–10 (TF) and His17. Residues Lys41, Thr73, and Arg87 each contribute to the substrate site. ATP is bound by residues 88-90 (GIR), Glu98, and 122-128 (LTCVSST).

Belongs to the bacterial CoaD family. Homohexamer. Mg(2+) is required as a cofactor.

Its subcellular location is the cytoplasm. The enzyme catalyses (R)-4'-phosphopantetheine + ATP + H(+) = 3'-dephospho-CoA + diphosphate. It participates in cofactor biosynthesis; coenzyme A biosynthesis; CoA from (R)-pantothenate: step 4/5. Its function is as follows. Reversibly transfers an adenylyl group from ATP to 4'-phosphopantetheine, yielding dephospho-CoA (dPCoA) and pyrophosphate. The sequence is that of Phosphopantetheine adenylyltransferase from Bacteroides fragilis (strain ATCC 25285 / DSM 2151 / CCUG 4856 / JCM 11019 / LMG 10263 / NCTC 9343 / Onslow / VPI 2553 / EN-2).